Consider the following 190-residue polypeptide: Holliday junction branch migration complex subunit RuvA (190 aa).

Residues 1–63 form a domain I region; sequence MIRKINATIE…EWNTSLYIFK (63 aa). The segment at 64–138 is domain II; it reads DKIERDVFES…NSFSAYSTGA (75 aa). Residues 138-142 form a flexible linker region; that stretch reads ADTQS. Positions 143 to 190 are domain III; sequence YGNNNLKEAIEALETLGFQRYEIMKVIGQLDLEDLKTEEIIKECLTRL.

Belongs to the RuvA family. In terms of assembly, homotetramer. Forms an RuvA(8)-RuvB(12)-Holliday junction (HJ) complex. HJ DNA is sandwiched between 2 RuvA tetramers; dsDNA enters through RuvA and exits via RuvB. An RuvB hexamer assembles on each DNA strand where it exits the tetramer. Each RuvB hexamer is contacted by two RuvA subunits (via domain III) on 2 adjacent RuvB subunits; this complex drives branch migration. In the full resolvosome a probable DNA-RuvA(4)-RuvB(12)-RuvC(2) complex forms which resolves the HJ.

It localises to the cytoplasm. The RuvA-RuvB-RuvC complex processes Holliday junction (HJ) DNA during genetic recombination and DNA repair, while the RuvA-RuvB complex plays an important role in the rescue of blocked DNA replication forks via replication fork reversal (RFR). RuvA specifically binds to HJ cruciform DNA, conferring on it an open structure. The RuvB hexamer acts as an ATP-dependent pump, pulling dsDNA into and through the RuvAB complex. HJ branch migration allows RuvC to scan DNA until it finds its consensus sequence, where it cleaves and resolves the cruciform DNA. This chain is Holliday junction branch migration complex subunit RuvA, found in Petrotoga mobilis (strain DSM 10674 / SJ95).